The sequence spans 490 residues: MTQWEVVIGLETHAQLSTVSKIFSGAPTQFGAEPNTQACPVDLALPGVLPVLNRGAVERAIRFGLAIGSTIAPRSIFARKNYFYPDLPKGYQISQYEIPVVQGGQITIQVPANEKAGKPAYEKTVNLTRAHLEEDAGKSLHEDFAGMTGIDLNRAGTPLLEIVTEPEMRSAAEAVAYAKALHALVVWLGICDGNMQEGSFRCDANVSVRPVGQEKFGTRAEIKNLNSFRFLEEAINYEVRRQIELIEDGGEVVQETRLYDPDKRETRSMRSKEDAHDYRYFPDPDLMPLVIGQDWIERVQAGMPELPAAIQQRFVDQYGVSAYDAGVLTSSKAMAAYFEAVVAKAGAANAKIAANWLMGDVSSQLNRDGIEIDAIPVSAAQLALVLQRIADGTISNKIAKEIFATIWDEKATDEGAADRIIDAKGLKQISDTGALEAIIDEVLAANAKSVEEFRAGKEKAFNALIGQAMKATKGKANPQQVNELLKKKLG.

The protein belongs to the GatB/GatE family. GatB subfamily. As to quaternary structure, heterotrimer of A, B and C subunits.

It catalyses the reaction L-glutamyl-tRNA(Gln) + L-glutamine + ATP + H2O = L-glutaminyl-tRNA(Gln) + L-glutamate + ADP + phosphate + H(+). It carries out the reaction L-aspartyl-tRNA(Asn) + L-glutamine + ATP + H2O = L-asparaginyl-tRNA(Asn) + L-glutamate + ADP + phosphate + 2 H(+). In terms of biological role, allows the formation of correctly charged Asn-tRNA(Asn) or Gln-tRNA(Gln) through the transamidation of misacylated Asp-tRNA(Asn) or Glu-tRNA(Gln) in organisms which lack either or both of asparaginyl-tRNA or glutaminyl-tRNA synthetases. The reaction takes place in the presence of glutamine and ATP through an activated phospho-Asp-tRNA(Asn) or phospho-Glu-tRNA(Gln). This chain is Aspartyl/glutamyl-tRNA(Asn/Gln) amidotransferase subunit B, found in Burkholderia vietnamiensis (strain G4 / LMG 22486) (Burkholderia cepacia (strain R1808)).